The following is a 40-amino-acid chain: Large ribosomal subunit protein bL36 (40 aa).

The protein belongs to the bacterial ribosomal protein bL36 family.

The chain is Large ribosomal subunit protein bL36 from Corynebacterium urealyticum (strain ATCC 43042 / DSM 7109).